The sequence spans 240 residues: tRNA (guanine-N(1)-)-methyltransferase (240 aa).

Residues Gly112 and 132-137 each bind S-adenosyl-L-methionine; that span reads LGDFVL.

This sequence belongs to the RNA methyltransferase TrmD family. In terms of assembly, homodimer.

It localises to the cytoplasm. It catalyses the reaction guanosine(37) in tRNA + S-adenosyl-L-methionine = N(1)-methylguanosine(37) in tRNA + S-adenosyl-L-homocysteine + H(+). In terms of biological role, specifically methylates guanosine-37 in various tRNAs. The polypeptide is tRNA (guanine-N(1)-)-methyltransferase (Cyanothece sp. (strain PCC 7425 / ATCC 29141)).